Here is a 1240-residue protein sequence, read N- to C-terminus: DNA polymerase II large subunit (1240 aa).

This sequence belongs to the archaeal DNA polymerase II family. Heterodimer of a large subunit and a small subunit.

The enzyme catalyses DNA(n) + a 2'-deoxyribonucleoside 5'-triphosphate = DNA(n+1) + diphosphate. The catalysed reaction is Exonucleolytic cleavage in the 3'- to 5'-direction to yield nucleoside 5'-phosphates.. In terms of biological role, possesses two activities: a DNA synthesis (polymerase) and an exonucleolytic activity that degrades single-stranded DNA in the 3'- to 5'-direction. Has a template-primer preference which is characteristic of a replicative DNA polymerase. This Methanopyrus kandleri (strain AV19 / DSM 6324 / JCM 9639 / NBRC 100938) protein is DNA polymerase II large subunit.